Reading from the N-terminus, the 171-residue chain is Phosphopantetheine adenylyltransferase (171 aa).

Residue threonine 10 coordinates substrate. ATP-binding positions include 10 to 11 (TF) and histidine 18. Substrate is bound by residues lysine 42, threonine 74, and arginine 88. Residues 89-91 (GLR), glutamate 99, and 124-130 (WACLSSK) each bind ATP.

It belongs to the bacterial CoaD family. In terms of assembly, homohexamer. Mg(2+) is required as a cofactor.

It is found in the cytoplasm. The enzyme catalyses (R)-4'-phosphopantetheine + ATP + H(+) = 3'-dephospho-CoA + diphosphate. Its pathway is cofactor biosynthesis; coenzyme A biosynthesis; CoA from (R)-pantothenate: step 4/5. Reversibly transfers an adenylyl group from ATP to 4'-phosphopantetheine, yielding dephospho-CoA (dPCoA) and pyrophosphate. This Blochmanniella pennsylvanica (strain BPEN) protein is Phosphopantetheine adenylyltransferase.